The chain runs to 576 residues: Enolase 4 (576 aa).

The tract at residues 187-232 (ELRNEAMSEAPPQATPTSAPAKDKKGNDKGKKGNITENPLPPAEPP) is disordered. Residues 196–206 (APPQATPTSAP) show a composition bias toward low complexity. Over residues 207–217 (AKDKKGNDKGK) the composition is skewed to basic and acidic residues. Substrate-binding residues include Glu-302 and Lys-524.

This sequence belongs to the enolase family.

The enzyme catalyses (2R)-2-phosphoglycerate = phosphoenolpyruvate + H2O. It functions in the pathway carbohydrate degradation; glycolysis; pyruvate from D-glyceraldehyde 3-phosphate: step 4/5. The polypeptide is Enolase 4 (eno4) (Danio rerio (Zebrafish)).